The following is a 125-amino-acid chain: Small ribosomal subunit protein uS12 (125 aa).

At aspartate 89 the chain carries 3-methylthioaspartic acid. Residues 106–125 (GVKDRKQSRSKYGAKRPKKA) form a disordered region. Positions 113–125 (SRSKYGAKRPKKA) are enriched in basic residues.

The protein belongs to the universal ribosomal protein uS12 family. In terms of assembly, part of the 30S ribosomal subunit. Contacts proteins S8 and S17. May interact with IF1 in the 30S initiation complex.

In terms of biological role, with S4 and S5 plays an important role in translational accuracy. Its function is as follows. Interacts with and stabilizes bases of the 16S rRNA that are involved in tRNA selection in the A site and with the mRNA backbone. Located at the interface of the 30S and 50S subunits, it traverses the body of the 30S subunit contacting proteins on the other side and probably holding the rRNA structure together. The combined cluster of proteins S8, S12 and S17 appears to hold together the shoulder and platform of the 30S subunit. This is Small ribosomal subunit protein uS12 from Aromatoleum aromaticum (strain DSM 19018 / LMG 30748 / EbN1) (Azoarcus sp. (strain EbN1)).